A 118-amino-acid polypeptide reads, in one-letter code: Large ribosomal subunit protein bL20 (118 aa).

The protein belongs to the bacterial ribosomal protein bL20 family.

Functionally, binds directly to 23S ribosomal RNA and is necessary for the in vitro assembly process of the 50S ribosomal subunit. It is not involved in the protein synthesizing functions of that subunit. The sequence is that of Large ribosomal subunit protein bL20 from Protochlamydia amoebophila (strain UWE25).